We begin with the raw amino-acid sequence, 258 residues long: Lyso-ornithine lipid O-acyltransferase (258 aa).

A helical transmembrane segment spans residues 7-29 (LLRSARLLGLVALGLGLAAWVSL).

Belongs to the 1-acyl-sn-glycerol-3-phosphate acyltransferase family. OlsA subfamily.

The protein resides in the membrane. It catalyses the reaction a lyso-ornithine lipid + a fatty acyl-[ACP] = an N(2)-[(3R)-3-(acyloxy)acyl]-L-ornithine lipid + holo-[ACP]. It functions in the pathway lipid metabolism. Functionally, catalyzes the second step in the formation of ornithine lipids, which are phosphorus-free membrane lipids. Uses acyl-acyl carrier protein (acyl-AcpP) as an acyl donor and converts lyso-ornithine lipid (LOL) into ornithine lipid (OL). In Pseudomonas aeruginosa (strain ATCC 15692 / DSM 22644 / CIP 104116 / JCM 14847 / LMG 12228 / 1C / PRS 101 / PAO1), this protein is Lyso-ornithine lipid O-acyltransferase.